We begin with the raw amino-acid sequence, 73 residues long: Large ribosomal subunit protein bL28 (73 aa).

It belongs to the bacterial ribosomal protein bL28 family.

This chain is Large ribosomal subunit protein bL28, found in Anaeromyxobacter dehalogenans (strain 2CP-1 / ATCC BAA-258).